The sequence spans 428 residues: Glutamate-1-semialdehyde 2,1-aminomutase 1 (428 aa).

Residue Lys-268 is modified to N6-(pyridoxal phosphate)lysine.

This sequence belongs to the class-III pyridoxal-phosphate-dependent aminotransferase family. HemL subfamily. In terms of assembly, homodimer. It depends on pyridoxal 5'-phosphate as a cofactor.

The protein resides in the cytoplasm. It catalyses the reaction (S)-4-amino-5-oxopentanoate = 5-aminolevulinate. It functions in the pathway porphyrin-containing compound metabolism; protoporphyrin-IX biosynthesis; 5-aminolevulinate from L-glutamyl-tRNA(Glu): step 2/2. This chain is Glutamate-1-semialdehyde 2,1-aminomutase 1, found in Geobacillus thermodenitrificans (strain NG80-2).